We begin with the raw amino-acid sequence, 335 residues long: Adenosine deaminase (335 aa).

Residues His-12 and His-14 each contribute to the Zn(2+) site. His-14 and Asp-16 together coordinate substrate. His-197 provides a ligand contact to Zn(2+). Residue Glu-200 is the Proton donor of the active site. A Zn(2+)-binding site is contributed by Asp-278.

Belongs to the metallo-dependent hydrolases superfamily. Adenosine and AMP deaminases family. Adenosine deaminase subfamily. The cofactor is Zn(2+).

It catalyses the reaction adenosine + H2O + H(+) = inosine + NH4(+). It carries out the reaction 2'-deoxyadenosine + H2O + H(+) = 2'-deoxyinosine + NH4(+). Functionally, catalyzes the hydrolytic deamination of adenosine and 2-deoxyadenosine. The chain is Adenosine deaminase from Clostridium botulinum (strain ATCC 19397 / Type A).